Reading from the N-terminus, the 39-residue chain is Cytochrome b559 subunit beta (39 aa).

The chain crosses the membrane as a helical span at residues 14–30 (WLAIHGLAVPTVFSLGS). Residue H18 participates in heme binding.

The protein belongs to the PsbE/PsbF family. Heterodimer of an alpha subunit and a beta subunit. PSII is composed of 1 copy each of membrane proteins PsbA, PsbB, PsbC, PsbD, PsbE, PsbF, PsbH, PsbI, PsbJ, PsbK, PsbL, PsbM, PsbT, PsbX, PsbY, PsbZ, Psb30/Ycf12, at least 3 peripheral proteins of the oxygen-evolving complex and a large number of cofactors. It forms dimeric complexes. Heme b is required as a cofactor.

The protein localises to the plastid. It is found in the chloroplast thylakoid membrane. In terms of biological role, this b-type cytochrome is tightly associated with the reaction center of photosystem II (PSII). PSII is a light-driven water:plastoquinone oxidoreductase that uses light energy to abstract electrons from H(2)O, generating O(2) and a proton gradient subsequently used for ATP formation. It consists of a core antenna complex that captures photons, and an electron transfer chain that converts photonic excitation into a charge separation. This is Cytochrome b559 subunit beta from Huperzia lucidula (Shining clubmoss).